The chain runs to 417 residues: Serine hydroxymethyltransferase (417 aa).

(6S)-5,6,7,8-tetrahydrofolate is bound by residues L121 and 125–127 (GHL). K229 is subject to N6-(pyridoxal phosphate)lysine. 355–357 (SPF) serves as a coordination point for (6S)-5,6,7,8-tetrahydrofolate.

Belongs to the SHMT family. In terms of assembly, homodimer. It depends on pyridoxal 5'-phosphate as a cofactor.

The protein resides in the cytoplasm. The catalysed reaction is (6R)-5,10-methylene-5,6,7,8-tetrahydrofolate + glycine + H2O = (6S)-5,6,7,8-tetrahydrofolate + L-serine. It participates in one-carbon metabolism; tetrahydrofolate interconversion. It functions in the pathway amino-acid biosynthesis; glycine biosynthesis; glycine from L-serine: step 1/1. In terms of biological role, catalyzes the reversible interconversion of serine and glycine with tetrahydrofolate (THF) serving as the one-carbon carrier. This reaction serves as the major source of one-carbon groups required for the biosynthesis of purines, thymidylate, methionine, and other important biomolecules. Also exhibits THF-independent aldolase activity toward beta-hydroxyamino acids, producing glycine and aldehydes, via a retro-aldol mechanism. The sequence is that of Serine hydroxymethyltransferase from Shewanella baltica (strain OS185).